The primary structure comprises 237 residues: Demethylmenaquinone methyltransferase (237 aa).

S-adenosyl-L-methionine contacts are provided by residues Thr58, Asp79, and 106-107 (NA).

This sequence belongs to the class I-like SAM-binding methyltransferase superfamily. MenG/UbiE family.

It carries out the reaction a 2-demethylmenaquinol + S-adenosyl-L-methionine = a menaquinol + S-adenosyl-L-homocysteine + H(+). It functions in the pathway quinol/quinone metabolism; menaquinone biosynthesis; menaquinol from 1,4-dihydroxy-2-naphthoate: step 2/2. Functionally, methyltransferase required for the conversion of demethylmenaquinol (DMKH2) to menaquinol (MKH2). The polypeptide is Demethylmenaquinone methyltransferase (Bacillus cytotoxicus (strain DSM 22905 / CIP 110041 / 391-98 / NVH 391-98)).